The sequence spans 270 residues: tRNA pseudouridine synthase A (270 aa).

Asp60 (nucleophile) is an active-site residue. The interval 107–111 is RNA binding; it reads FHARF. Residue Tyr118 coordinates substrate. Residues 168 to 172 form an interaction with tRNA region; sequence QCQSR.

The protein belongs to the tRNA pseudouridine synthase TruA family. As to quaternary structure, homodimer.

The catalysed reaction is uridine(38/39/40) in tRNA = pseudouridine(38/39/40) in tRNA. Formation of pseudouridine at positions 38, 39 and 40 in the anticodon stem and loop of transfer RNAs. The polypeptide is tRNA pseudouridine synthase A (Escherichia coli O139:H28 (strain E24377A / ETEC)).